The primary structure comprises 396 residues: NADH-quinone oxidoreductase subunit D 1 (396 aa).

It belongs to the complex I 49 kDa subunit family. As to quaternary structure, NDH-1 is composed of 14 different subunits. Subunits NuoB, C, D, E, F, and G constitute the peripheral sector of the complex.

The protein resides in the cell inner membrane. The catalysed reaction is a quinone + NADH + 5 H(+)(in) = a quinol + NAD(+) + 4 H(+)(out). Functionally, NDH-1 shuttles electrons from NADH, via FMN and iron-sulfur (Fe-S) centers, to quinones in the respiratory chain. The immediate electron acceptor for the enzyme in this species is believed to be ubiquinone. Couples the redox reaction to proton translocation (for every two electrons transferred, four hydrogen ions are translocated across the cytoplasmic membrane), and thus conserves the redox energy in a proton gradient. This is NADH-quinone oxidoreductase subunit D 1 from Beijerinckia indica subsp. indica (strain ATCC 9039 / DSM 1715 / NCIMB 8712).